Consider the following 754-residue polypeptide: uncharacterized protein (754 aa).

The segment at 1-110 (MNKGQNQVVP…RNMLGSLQKT (110 aa)) is disordered. The span at 15–25 (FGGQNPPQLSS) shows a compositional bias: polar residues. The span at 26 to 35 (IPPIVNPVVV) shows a compositional bias: low complexity. Positions 36 to 46 (QNRTSPGTPFI) are enriched in polar residues. The segment covering 49-60 (KAKEIYNRRQQE) has biased composition (basic and acidic residues). Over residues 62 to 72 (ISSDSEEEESP) the composition is skewed to acidic residues. Residues 76–93 (AKSKYSRDSRDSRDTRDS) show a composition bias toward basic and acidic residues.

It is found in the virion. This is an uncharacterized protein from Acanthamoeba polyphaga mimivirus (APMV).